Here is a 233-residue protein sequence, read N- to C-terminus: Aspartate/glutamate leucyltransferase (233 aa).

This sequence belongs to the R-transferase family. Bpt subfamily.

The protein localises to the cytoplasm. The catalysed reaction is N-terminal L-glutamyl-[protein] + L-leucyl-tRNA(Leu) = N-terminal L-leucyl-L-glutamyl-[protein] + tRNA(Leu) + H(+). It catalyses the reaction N-terminal L-aspartyl-[protein] + L-leucyl-tRNA(Leu) = N-terminal L-leucyl-L-aspartyl-[protein] + tRNA(Leu) + H(+). Functions in the N-end rule pathway of protein degradation where it conjugates Leu from its aminoacyl-tRNA to the N-termini of proteins containing an N-terminal aspartate or glutamate. This Vibrio cholerae serotype O1 (strain ATCC 39541 / Classical Ogawa 395 / O395) protein is Aspartate/glutamate leucyltransferase.